The sequence spans 271 residues: 2,3,4,5-tetrahydropyridine-2,6-dicarboxylate N-succinyltransferase (271 aa).

R103 and D140 together coordinate substrate.

The protein belongs to the transferase hexapeptide repeat family. Homotrimer.

It localises to the cytoplasm. It carries out the reaction (S)-2,3,4,5-tetrahydrodipicolinate + succinyl-CoA + H2O = (S)-2-succinylamino-6-oxoheptanedioate + CoA. The protein operates within amino-acid biosynthesis; L-lysine biosynthesis via DAP pathway; LL-2,6-diaminopimelate from (S)-tetrahydrodipicolinate (succinylase route): step 1/3. The polypeptide is 2,3,4,5-tetrahydropyridine-2,6-dicarboxylate N-succinyltransferase (Methylococcus capsulatus (strain ATCC 33009 / NCIMB 11132 / Bath)).